We begin with the raw amino-acid sequence, 83 residues long: Exodeoxyribonuclease 7 small subunit (83 aa).

The protein belongs to the XseB family. In terms of assembly, heterooligomer composed of large and small subunits.

Its subcellular location is the cytoplasm. The enzyme catalyses Exonucleolytic cleavage in either 5'- to 3'- or 3'- to 5'-direction to yield nucleoside 5'-phosphates.. Bidirectionally degrades single-stranded DNA into large acid-insoluble oligonucleotides, which are then degraded further into small acid-soluble oligonucleotides. The polypeptide is Exodeoxyribonuclease 7 small subunit (Rhizobium rhizogenes (strain K84 / ATCC BAA-868) (Agrobacterium radiobacter)).